The chain runs to 90 residues: Conotoxin Ca8.2 (90 aa).

The N-terminal stretch at Met1–Gln21 is a signal peptide. Positions Gln22–Arg46 are excised as a propeptide. Gln89 carries the post-translational modification Glutamine amide.

It belongs to the conotoxin S superfamily. Contains 5 disulfide bonds. In terms of tissue distribution, expressed by the venom duct.

The protein resides in the secreted. The chain is Conotoxin Ca8.2 from Conus caracteristicus (Characteristic cone).